The following is a 230-amino-acid chain: Somatolactin (230 aa).

The signal sequence occupies residues 1–23 (MNMMTVKQGVWAALLWPYLLAAS). 3 cysteine pairs are disulfide-bonded: cysteine 28–cysteine 38, cysteine 88–cysteine 204, and cysteine 221–cysteine 229. N-linked (GlcNAc...) asparagine glycans are attached at residues asparagine 137 and asparagine 144.

It belongs to the somatotropin/prolactin family.

Its subcellular location is the secreted. In Hippoglossus hippoglossus (Atlantic halibut), this protein is Somatolactin.